A 1275-amino-acid chain; its full sequence is MENFILYEEIGRGSKSVVYKGRRKGTINFVAILCTDKCKRPEITNWVRLTHEIKHKNIVTFHEWYETSNHLWLVVELCTGGSLKTVIAQDENLPEDVVREFGIDLISGLHHLHKLGILFCDISPRKILLEGPGTLKFSNFCLAKVEGENLEEFFALVAAEEGGGDSGENVLKKSMKSRVKGSPVYTAPEVVRGAEFSISSDLWSVGCLLYEMFSGKPPFFSESISELTEKILCEDPLPPIPKDSSCPKASSDFTNLLDGLLQRDPQKRLTWTRLLQHSFWKKAFAGADQESSVEDLSLSRNTMECSGPQDSKELLQNSQSRQAKGHKSGQRLGHYFRLENPTEFRPKSTLEGQLNESMFLLSSRPTPRTSTAVEVSPGEDRTHCSPQKTSPLTKITSGRLSQQDLESQMRELIYTDSDLVVTPIIDNPKIMKQPPVKFDPKILHLPAYSVDKLLFLKDQDWNDFLQQVCSQIDSTEKSMGASRAKLNLLCYLCMVAGHQEVATRLLHSPLFKLLIQHLRIAPNWDIRAKVARVIGLLASHTTELQENTPVVEAIVLLTELIRENFRNSKLKQCLLPTLGELIYLVATQEEKKKNPRECWAFPLAAYTVLMRCLREGEERVVNHMAAKIIENVCTTFSAQAQGFITGEIGPILWYLFRHSTADSLRITAVSALCRITRHSPTAFQNVIEKVGLNSVINSLASAICKVQQYMLTLFTAMLSCGVHLQRLIQEKDFVSTIIRLLESPSTYIRAKAFLVLLYILIYNREMLLLSCQARLVMYIERDSRKITPGKEQQSGNEYLSKCLDLLIRHIVQELPRILGDILNSLANVSGRKHPSTVQVKQLKMCLPLMPIVLHLVTSQVFRPQVVTEEFLFSYGTILSHIKSVDSGETNIDGAIGLTASEEFIKITLSAFEAIIQYPILLKDYRSTVVDYILPPLVSLVQSQNVEWRLFSLRLLSETTSLLVNQEFGDGKEKASVDSDSNLLALIRDVLLPQYEHILVEPDPVPAYALKLLVAMTEHNPTFTRLVEESKLIPLIFEVTLEHQESILGNTMQSVIALLNNLVACKDSNMKLLYEQGLVSHICNLLTETATLCLDVDNKNNNEMAAALLFSLLDILHSMLTYTSGIVRLALQTQKSGSGEDIQAAEDLLLLNRPLTDLISLLIPLLPNEDPEIFDVSSKCLSILVQLYGGENPDSLSPENVEIFAHLLTSKEDPKEQKLLLRILRRMITSNEKHLESLKNAGSLLRALERLAPGSGSFADSVVAPLALEILQAVGR.

The Protein kinase domain occupies Phe4–Trp280. The Proton acceptor role is filled by Asp121. 2 disordered regions span residues Ser299 to Pro346 and Phe359 to Thr393. Over residues Phe336 to Pro346 the composition is skewed to basic and acidic residues. Composition is skewed to polar residues over residues Ser363 to Val373 and Cys384 to Thr393. 6 HEAT repeats span residues Leu727–Glu765, Leu842–His880, Ser926–Asn964, Leu1025–Ala1063, Asn1151–Gly1189, and Pro1213–Gly1253.

Belongs to the protein kinase superfamily. Ser/Thr protein kinase family. APG1/unc-51/ULK1 subfamily.

It catalyses the reaction L-seryl-[protein] + ATP = O-phospho-L-seryl-[protein] + ADP + H(+). The enzyme catalyses L-threonyl-[protein] + ATP = O-phospho-L-threonyl-[protein] + ADP + H(+). Its function is as follows. May be involved in the remodeling of cytoskeletal components, such as alpha-tubulin, and in this way regulates neurite branching and elongation, as well as cell motility. This Pongo abelii (Sumatran orangutan) protein is Serine/threonine-protein kinase ULK4 (ULK4).